The sequence spans 76 residues: Small ribosomal subunit protein bS18 (76 aa).

It belongs to the bacterial ribosomal protein bS18 family. In terms of assembly, part of the 30S ribosomal subunit. Forms a tight heterodimer with protein bS6.

Functionally, binds as a heterodimer with protein bS6 to the central domain of the 16S rRNA, where it helps stabilize the platform of the 30S subunit. In Brevibacillus brevis (strain 47 / JCM 6285 / NBRC 100599), this protein is Small ribosomal subunit protein bS18.